A 163-amino-acid polypeptide reads, in one-letter code: Nucleotide-binding protein YajQ (163 aa).

The protein belongs to the YajQ family.

In terms of biological role, nucleotide-binding protein. The sequence is that of Nucleotide-binding protein YajQ from Shigella dysenteriae serotype 1 (strain Sd197).